The following is a 463-amino-acid chain: 23S rRNA (uracil(1939)-C(5))-methyltransferase RlmD (463 aa).

The 69-residue stretch at R8 to E76 folds into the TRAM domain. [4Fe-4S] cluster-binding residues include C90, C96, C99, and C178. Residues Q288, F317, N322, E341, D368, and D389 each contribute to the S-adenosyl-L-methionine site. The active-site Nucleophile is the C415.

It belongs to the class I-like SAM-binding methyltransferase superfamily. RNA M5U methyltransferase family. RlmD subfamily.

The enzyme catalyses uridine(1939) in 23S rRNA + S-adenosyl-L-methionine = 5-methyluridine(1939) in 23S rRNA + S-adenosyl-L-homocysteine + H(+). Its function is as follows. Catalyzes the formation of 5-methyl-uridine at position 1939 (m5U1939) in 23S rRNA. The chain is 23S rRNA (uracil(1939)-C(5))-methyltransferase RlmD from Acinetobacter baylyi (strain ATCC 33305 / BD413 / ADP1).